Consider the following 138-residue polypeptide: Ostreolysin A6 (138 aa).

It belongs to the aegerolysin family. Monomer.

Its function is as follows. Has hemolytic activity against bovine erythrocytes at nanomolar concentrations in vitro. Promotes active pleurotolysin B (PlyB)-dependent permeabilization of membranes rich in cholesterol and sphingomyelin. May play an important role in the initial phase of fungal fruiting. The polypeptide is Ostreolysin A6 (OlyA6) (Pleurotus ostreatus (Oyster mushroom)).